Here is a 610-residue protein sequence, read N- to C-terminus: Chitinase 63 (610 aa).

Residues 1 to 30 (MRFRHKAAALAATLALPLAGLVGLASPAQA) form the signal peptide. The CBM2 domain occupies 31–134 (ATSATATFQK…KINGGSCDGS (104 aa)). 2 disordered regions span residues 125-153 (KING…ASNI) and 208-239 (ARDT…PNPG). Residues 144–229 (APGTPTASNI…GSVKVTTTGG (86 aa)) form the Fibronectin type-III domain. Over residues 213-224 (DQTGPASGSVKV) the composition is skewed to polar residues. The GH18 domain occupies 241–610 (EVKMGYFTNW…LVSAIDSGLK (370 aa)). Chitin contacts are provided by residues 313-314 (DQ) and 340-343 (GGWT). Glu-383 (proton donor) is an active-site residue. Residues Tyr-384, 450-453 (MTYD), and Trp-590 contribute to the chitin site.

Belongs to the glycosyl hydrolase 18 family. Chitinase class II subfamily.

The enzyme catalyses Random endo-hydrolysis of N-acetyl-beta-D-glucosaminide (1-&gt;4)-beta-linkages in chitin and chitodextrins.. This chain is Chitinase 63 (chtA), found in Streptomyces plicatus.